We begin with the raw amino-acid sequence, 50 residues long: Monellin chain B (50 aa).

Heterodimer of an A chain and a B chain.

Functionally, taste-modifying protein; intensely sweet-tasting protein. This is Monellin chain B from Dioscoreophyllum cumminsii (Serendipity berry).